A 390-amino-acid chain; its full sequence is Succinate--CoA ligase [ADP-forming] subunit beta (390 aa).

An ATP-grasp domain is found at 9-245; sequence KHLLKKYNIP…TTQEDEHETM (237 aa). ATP contacts are provided by residues Lys-46, 53 to 55, Glu-99, Ser-102, and Glu-107; that span reads GRG. Mg(2+)-binding residues include Asn-200 and Asp-214. Substrate-binding positions include Asn-265 and 322–324; that span reads GIV.

This sequence belongs to the succinate/malate CoA ligase beta subunit family. In terms of assembly, heterotetramer of two alpha and two beta subunits. Mg(2+) serves as cofactor.

The catalysed reaction is succinate + ATP + CoA = succinyl-CoA + ADP + phosphate. It catalyses the reaction GTP + succinate + CoA = succinyl-CoA + GDP + phosphate. The protein operates within carbohydrate metabolism; tricarboxylic acid cycle; succinate from succinyl-CoA (ligase route): step 1/1. Functionally, succinyl-CoA synthetase functions in the citric acid cycle (TCA), coupling the hydrolysis of succinyl-CoA to the synthesis of either ATP or GTP and thus represents the only step of substrate-level phosphorylation in the TCA. The beta subunit provides nucleotide specificity of the enzyme and binds the substrate succinate, while the binding sites for coenzyme A and phosphate are found in the alpha subunit. In Coxiella burnetii (strain Dugway 5J108-111), this protein is Succinate--CoA ligase [ADP-forming] subunit beta.